We begin with the raw amino-acid sequence, 228 residues long: Urease accessory protein UreF (228 aa).

This sequence belongs to the UreF family. In terms of assembly, ureD, UreF and UreG form a complex that acts as a GTP-hydrolysis-dependent molecular chaperone, activating the urease apoprotein by helping to assemble the nickel containing metallocenter of UreC. The UreE protein probably delivers the nickel.

It is found in the cytoplasm. Required for maturation of urease via the functional incorporation of the urease nickel metallocenter. The sequence is that of Urease accessory protein UreF from Alkalilimnicola ehrlichii (strain ATCC BAA-1101 / DSM 17681 / MLHE-1).